The sequence spans 102 residues: Small ribosomal subunit protein uS10 (102 aa).

This sequence belongs to the universal ribosomal protein uS10 family. In terms of assembly, part of the 30S ribosomal subunit.

Functionally, involved in the binding of tRNA to the ribosomes. In Streptomyces griseus subsp. griseus (strain JCM 4626 / CBS 651.72 / NBRC 13350 / KCC S-0626 / ISP 5235), this protein is Small ribosomal subunit protein uS10.